We begin with the raw amino-acid sequence, 483 residues long: MAQADIALIGLAVMGQNLILNMNDHGFVVCAFNRTVSKVDDFLAKEAKGTKVIGAKSLKDMVSKLKKPRRVILLVKAGQAVDDFIEKLVPLLDTGDIIIDGGNSEYRDTTRRCQDLKAKGILFVGSGVSGGEEGARYGPSLMPGGNKEAWPHIKTIFQAIAAKVGTGEPCCDWVGDEGAGHFVKMVHNGIEYGDMQLICEAYHLMKDVLGMRHEEMAQAFEDWNKTELDSFLIEITANILKFQDTDGKELLPKIRDSAGQKGTGKWTAISALEYGMPVTLIGEAVFARCLSSLKEERVQASRKLKGPKMVQLEGSKQAFLEDVRKALYASKIISYAQGFMLLRQAATEFGWTLNYGGIALMWRGGCIIRSVFLGKIKDAFERNPELQNLLLDDFFKSAVDDCQDSWRRVISTGVQAGIPMPCFTTALSFYDGYRHEMLPANLIQAQRDYFGAHTYELLSKPGEFIHTNWTGHGGSVSSSSYNA.

NADP(+) is bound by residues G10 to G15 and N33 to T35. Position 38 is an N6-acetyllysine (K38). S57 carries the post-translational modification Phosphoserine. K59 is modified (N6-acetyllysine). NADP(+) is bound by residues V75–A77 and N103. Residues N103 and S129–G131 each bind substrate. Residue S129 is modified to Phosphoserine. The Proton acceptor role is filled by K184. H187–N188 provides a ligand contact to substrate. E191 functions as the Proton donor in the catalytic mechanism. Residues Y192, K261, R288, R447, and H453 each coordinate substrate. S478–Y481 contacts NADP(+).

It belongs to the 6-phosphogluconate dehydrogenase family. As to quaternary structure, homodimer.

It localises to the cytoplasm. The catalysed reaction is 6-phospho-D-gluconate + NADP(+) = D-ribulose 5-phosphate + CO2 + NADPH. It participates in carbohydrate degradation; pentose phosphate pathway; D-ribulose 5-phosphate from D-glucose 6-phosphate (oxidative stage): step 3/3. Catalyzes the oxidative decarboxylation of 6-phosphogluconate to ribulose 5-phosphate and CO(2), with concomitant reduction of NADP to NADPH. The chain is 6-phosphogluconate dehydrogenase, decarboxylating from Rattus norvegicus (Rat).